A 529-amino-acid chain; its full sequence is Calcium/calmodulin-dependent protein kinase type II subunit gamma (529 aa).

A Protein kinase domain is found at 14-272 (YQLFEELGKG…ADQALKHPWV (259 aa)). ATP contacts are provided by residues 20–28 (LGKGAFSVV) and lysine 43. Residue aspartate 136 is the Proton acceptor of the active site. Residues 283-292 (HRQETVECLR) are autoinhibitory domain. 3 positions are modified to phosphothreonine; by autocatalysis: threonine 287, threonine 306, and threonine 307. A calmodulin-binding region spans residues 294-316 (FNARRKLKGAILTTMLVSRNFSA). Residues serine 311, serine 334, serine 349, serine 352, and serine 455 each carry the phosphoserine modification. A disordered region spans residues 324 to 353 (KSDGGVKKRKSSSSVHLMPQSNNKNSLVSP). Polar residues predominate over residues 342-352 (PQSNNKNSLVS).

Belongs to the protein kinase superfamily. CAMK Ser/Thr protein kinase family. CaMK subfamily. As to quaternary structure, CAMK2 is composed of 4 different chains: alpha (CAMK2A), beta (CAMK2B), gamma (CAMK2G), and delta (CAMK2D). The different isoforms assemble into homo- or heteromultimeric holoenzymes composed of 12 subunits with two hexameric rings stacked one on top of the other. In terms of processing, autophosphorylation of Thr-287 following activation by Ca(2+)/calmodulin. Phosphorylation of Thr-287 locks the kinase into an activated state.

It is found in the sarcoplasmic reticulum membrane. The catalysed reaction is L-seryl-[protein] + ATP = O-phospho-L-seryl-[protein] + ADP + H(+). It catalyses the reaction L-threonyl-[protein] + ATP = O-phospho-L-threonyl-[protein] + ADP + H(+). Activated by Ca(2+)/calmodulin. Binding of calmodulin results in conformational change that relieves intrasteric autoinhibition and allows autophosphorylation of Thr-287 which turns the kinase in a constitutively active form and confers to the kinase a Ca(2+)-independent activity. Calcium/calmodulin-dependent protein kinase that functions autonomously after Ca(2+)/calmodulin-binding and autophosphorylation, and is involved in sarcoplasmic reticulum Ca(2+) transport in skeletal muscle and may function in dendritic spine and synapse formation and neuronal plasticity. In slow-twitch muscles, is involved in regulation of sarcoplasmic reticulum (SR) Ca(2+) transport and in fast-twitch muscle participates in the control of Ca(2+) release from the SR through phosphorylation of the ryanodine receptor-coupling factor triadin. In the central nervous system, it is involved in the regulation of neurite formation and arborization. It may participate in the promotion of dendritic spine and synapse formation and maintenance of synaptic plasticity which enables long-term potentiation (LTP) and hippocampus-dependent learning. In response to interferon-gamma (IFN-gamma) stimulation, catalyzes phosphorylation of STAT1, stimulating the JAK-STAT signaling pathway. The protein is Calcium/calmodulin-dependent protein kinase type II subunit gamma (Camk2g) of Mus musculus (Mouse).